Here is a 101-residue protein sequence, read N- to C-terminus: Small ribosomal subunit protein uS10 (101 aa).

The protein belongs to the universal ribosomal protein uS10 family. In terms of assembly, part of the 30S ribosomal subunit.

In terms of biological role, involved in the binding of tRNA to the ribosomes. The protein is Small ribosomal subunit protein uS10 of Brachyspira pilosicoli (Serpulina pilosicoli).